Here is a 473-residue protein sequence, read N- to C-terminus: UDP-N-acetylmuramate--L-alanine ligase (473 aa).

114–120 provides a ligand contact to ATP; sequence GTHGKTT.

The protein belongs to the MurCDEF family.

It localises to the cytoplasm. The catalysed reaction is UDP-N-acetyl-alpha-D-muramate + L-alanine + ATP = UDP-N-acetyl-alpha-D-muramoyl-L-alanine + ADP + phosphate + H(+). Its pathway is cell wall biogenesis; peptidoglycan biosynthesis. Functionally, cell wall formation. This is UDP-N-acetylmuramate--L-alanine ligase from Chlorobium luteolum (strain DSM 273 / BCRC 81028 / 2530) (Pelodictyon luteolum).